Here is a 170-residue protein sequence, read N- to C-terminus: Large ribosomal subunit protein uL10 (170 aa).

Belongs to the universal ribosomal protein uL10 family. In terms of assembly, part of the ribosomal stalk of the 50S ribosomal subunit. The N-terminus interacts with L11 and the large rRNA to form the base of the stalk. The C-terminus forms an elongated spine to which L12 dimers bind in a sequential fashion forming a multimeric L10(L12)X complex.

Its function is as follows. Forms part of the ribosomal stalk, playing a central role in the interaction of the ribosome with GTP-bound translation factors. This is Large ribosomal subunit protein uL10 from Lactobacillus helveticus (strain DPC 4571).